The sequence spans 593 residues: Regulatory protein NPR1 (593 aa).

Phosphoserine is present on residues serine 11, serine 15, serine 55, and serine 59. The BTB domain maps to 65 to 144; sequence SDAKLVLSDG…VYSSRVRPPP (80 aa). The C2HC NPR-type zinc finger occupies 147 to 161; the sequence is VSECADENCCHVACR. Zn(2+) is bound by residues cysteine 150 and cysteine 155. Cysteine 156 carries the post-translational modification S-nitrosocysteine. Residues histidine 157 and cysteine 160 each coordinate Zn(2+). ANK repeat units lie at residues 229 to 258, 265 to 295, 297 to 324, 328 to 357, and 361 to 397; these read KSNV…ELGL, KHVS…NLDD, CALH…DVNH, RGYT…SASE, and EGRT…CVEI. An SIM3, required fo binding to SUMO3 and subsequent sumoylation motif is present at residues 345 to 348; that stretch reads ILSL. Positions 387–525 are salicylic acid-binding core (SBC); sequence HSLKGRLCVE…DQIMNCEDLT (139 aa). Arginine 432 serves as a coordination point for salicylate. A Nuclear localization signal motif is present at residues 537–554; it reads KRLQKKQRYMEIQETLKK. A disordered region spans residues 563 to 593; the sequence is LGNSSLTDSTSSTSKSTGGKRSNRKLSHRRR. Over residues 566–579 the composition is skewed to low complexity; it reads SSLTDSTSSTSKST. Residues 583 to 593 are compositionally biased toward basic residues; that stretch reads RSNRKLSHRRR.

It belongs to the plant 'ANKYRIN-BTB/POZ' family. 'NPR1-like' subfamily. Homodimer. Oligomer of dimers in an uninduced quiescent state; disulfide-linked. Forms activated (i.e. sumoylated) homodimers and monomers upon systemic acquired resistance (SAR) induction. Interacts with TGA1, TGA3, TGA4, TGA5, TGA6, TGA7 and with reduced forms of TGA1 and TGA4. Activated homodimer binds two TGA3 dimers in the presence of DNA via its ANK 2 repeat (265-295), thus forming a TGA3(2)-NPR1(2)-TGA3(2) complex in which NPR1 serves as a transcription cofactor by bridging two transcription factor complexes in an enhanceosome. Interacts with NIMIN-1 and NIMIN-3 via its C-terminal region, and with NIMIN-2 via its N-terminal region. Interacts with SUMO3 but not with SUMO1 and SUMO2; this interaction is required for phosphorylation at Ser-11 and Ser-15, and triggers activation by sumoylation and subsequent degradation. Binds to NPR3 and NPR4; these interactions are promoted by association of salicylic acid (SA) with NPR3, but disrupted by SA association with NPR4, probably due to conformational changes. Binds to CUL3A, a core component of the cullin-RING ubiquitin ligases (CRL); this interaction requires NPR3 and NPR4. Interacts with NPR2 independently of SA. Binds to WRKY70 when unmodified (i.e. not sumoylated). Phosphorylation at Ser-55 and Ser-59 prevents sumoylation to ensure stability and quiescence. Post-translationally, phosphorylated at Ser-11 and Ser-15 in the nucleus; facilitates its recruitment to a cullin3-based ubiquitin ligase leading to polyubiquitination and subsequent CUL3/CSN-mediated degradation. This phosphorylation at Ser-11 and Ser-15 requires interaction with SUMO3, and promotes in turn activation by sumoylation and subsequent degradation. In terms of processing, ubiquitinated. Sumoylated by SUMO3 independently of an E3 ligase to activate defense gene expression by switching from association with WRKY transcriptional repressors (e.g. WRKY70) to TGA transcriptional activators (e.g. TGA3). Sumoylation is inhibited by phosphorylation at Ser-55 and Ser-59, but seems to promote phosphorylation at Ser-11 and Ser-15. Sumoylation also triggers degradation, making immune induction transient. Post-translationally, the Cys-82-SH group reacts with Cys-216-SH of the other subunit to form an intermolecular disulfide. This disulfide might subsequently be reduced upon systemic acquired resistance (SAR) induction. In terms of processing, S-nitrosylation at Cys-156 facilitates its oligomerization.

It localises to the cytoplasm. The protein localises to the nucleus. Its subcellular location is the nuclear body. It participates in protein modification; protein ubiquitination. Functionally, salicylic acid (SA)-binding substrate-specific adapter of an E3 ubiquitin-protein ligase complex (CUL3-RBX1-BTB) which mediates the ubiquitination and subsequent proteasomal degradation of target proteins. Transcription cofactor that represses gene expression in the absence of salicylic acid (SA), when attached to negative cis-elements (W-box) with WRKY transcription factors (e.g. WRKY70), but stimulates gene expression upon activation by SA, when sumoylated and attached to positive cis-elements (as-1) with TGA transcription factors (e.g. TGA3), thus confering immunity through a series of gene regulations ending in a significant increase in antimicrobial and defense genes expression (e.g. PR-1 and PR-2). Binds to SA with low capacity; this leads to conformational changes. Key positive regulator of the SA-dependent signaling pathway that negatively regulates jasmonic acid (JA)-dependent signaling pathway. Controls the onset of systemic acquired resistance (SAR). Upon SAR induction, a biphasic change in cellular reduction potential occurs, resulting in reduction of the cytoplasmic oligomeric form to dimeric and monomeric forms, which accumulate in the nucleus and activate gene expression. Appears to control lesion expansion by acting as an inhibitor of programmed cell death (PCD) during effector-triggered immunity (ETI) that occurs in response to incompatible interaction with avirulent pathogenic bacteria (i.e. Pseudomonas syringae ES4326/avrRpt2) ending in a hypersensitive response (HR). Phosphorylated form is target of proteasome degradation. The protein is Regulatory protein NPR1 of Arabidopsis thaliana (Mouse-ear cress).